We begin with the raw amino-acid sequence, 870 residues long: Eukaryotic translation initiation factor 3 subunit C (870 aa).

The segment at 1–92 (MSRFFRGDSS…GVKVVKSAKN (92 aa)) is disordered. Over residues 14 to 54 (SSDEEEDLYSDDEEVQEQPEEESEEDDSEEDDDDDDSDSSS) the composition is skewed to acidic residues. One can recognise a PCI domain in the interval 608–782 (FHMHINLELL…SSIIFRKGVE (175 aa)). Residues 807-870 (TLETRTQGTA…ALGAAVGSRA (64 aa)) are disordered. Residues 824–844 (GRGGRGGNRGGRGGNRGGRGG) show a composition bias toward gly residues.

Belongs to the eIF-3 subunit C family. Component of the eukaryotic translation initiation factor 3 (eIF-3) complex.

The protein resides in the cytoplasm. Functionally, component of the eukaryotic translation initiation factor 3 (eIF-3) complex, which is involved in protein synthesis of a specialized repertoire of mRNAs and, together with other initiation factors, stimulates binding of mRNA and methionyl-tRNAi to the 40S ribosome. The eIF-3 complex specifically targets and initiates translation of a subset of mRNAs involved in cell proliferation. The protein is Eukaryotic translation initiation factor 3 subunit C (nip1) of Sclerotinia sclerotiorum (strain ATCC 18683 / 1980 / Ss-1) (White mold).